The primary structure comprises 400 residues: Enoyl-[acyl-carrier-protein] reductase [NADH] 1 (400 aa).

Residues glycine 48–tyrosine 53, phenylalanine 74–glutamate 75, aspartate 111–alanine 112, and leucine 139–alanine 140 contribute to the NAD(+) site. A substrate-binding site is contributed by tyrosine 225. The active-site Proton donor is the tyrosine 235. Residues lysine 244 and valine 273–threonine 275 each bind NAD(+).

Belongs to the TER reductase family. Monomer.

The enzyme catalyses a 2,3-saturated acyl-[ACP] + NAD(+) = a (2E)-enoyl-[ACP] + NADH + H(+). The protein operates within lipid metabolism; fatty acid biosynthesis. Involved in the final reduction of the elongation cycle of fatty acid synthesis (FAS II). Catalyzes the reduction of a carbon-carbon double bond in an enoyl moiety that is covalently linked to an acyl carrier protein (ACP). In Vibrio vulnificus (strain CMCP6), this protein is Enoyl-[acyl-carrier-protein] reductase [NADH] 1.